A 434-amino-acid chain; its full sequence is Enolase (434 aa).

Glutamine 163 is a (2R)-2-phosphoglycerate binding site. Glutamate 205 acts as the Proton donor in catalysis. The Mg(2+) site is built by aspartate 242, glutamate 289, and aspartate 316. Lysine 341, arginine 370, serine 371, and lysine 392 together coordinate (2R)-2-phosphoglycerate. Residue lysine 341 is the Proton acceptor of the active site.

This sequence belongs to the enolase family. Mg(2+) serves as cofactor.

The protein localises to the cytoplasm. Its subcellular location is the secreted. It is found in the cell surface. It carries out the reaction (2R)-2-phosphoglycerate = phosphoenolpyruvate + H2O. The protein operates within carbohydrate degradation; glycolysis; pyruvate from D-glyceraldehyde 3-phosphate: step 4/5. Functionally, catalyzes the reversible conversion of 2-phosphoglycerate (2-PG) into phosphoenolpyruvate (PEP). It is essential for the degradation of carbohydrates via glycolysis. The chain is Enolase from Lacticaseibacillus casei (strain BL23) (Lactobacillus casei).